The sequence spans 93 residues: Small ribosomal subunit protein uS19 (93 aa).

Belongs to the universal ribosomal protein uS19 family.

Functionally, protein S19 forms a complex with S13 that binds strongly to the 16S ribosomal RNA. The protein is Small ribosomal subunit protein uS19 of Leifsonia xyli subsp. xyli (strain CTCB07).